Consider the following 606-residue polypeptide: Ubiquitin-like modifier-activating enzyme ATG7 (606 aa).

The GXGXXG motif motif lies at 316–321 (GSGTLG). The active-site Glycyl thioester intermediate is the C488. Residues 567 to 606 (ALDDYKCVEKLSGLSKVQEEAELALEEDFDFSEDDEFVTG) are homodimerization.

Belongs to the ATG7 family. As to quaternary structure, homodimer. Interacts with ATG8 through a thioester bond between Cys-488 and the C-terminal Gly of ATG8 and with ATG12 through a thioester bond between Cys-488 and the C-terminal Gly of ATG12. Also interacts with ATG3.

It localises to the cytoplasm. It is found in the preautophagosomal structure. Functionally, E1-like activating enzyme involved in the 2 ubiquitin-like systems required for cytoplasm to vacuole transport (Cvt) and autophagy. Activates ATG12 for its conjugation with ATG5 and ATG8 for its conjugation with phosphatidylethanolamine. Both systems are needed for the ATG8 association to Cvt vesicles and autophagosomes membranes. Autophagy is essential for maintenance of amino acid levels and protein synthesis under nitrogen starvation. Required for selective autophagic degradation of the nucleus (nucleophagy) as well as for mitophagy which contributes to regulate mitochondrial quantity and quality by eliminating the mitochondria to a basal level to fulfill cellular energy requirements and preventing excess ROS production. This Kluyveromyces marxianus (strain DMKU3-1042 / BCC 29191 / NBRC 104275) (Yeast) protein is Ubiquitin-like modifier-activating enzyme ATG7.